We begin with the raw amino-acid sequence, 713 residues long: Polyphosphate kinase (713 aa).

Asparagine 63 is an ATP binding site. Residues arginine 394 and arginine 424 each contribute to the Mg(2+) site. Histidine 454 (phosphohistidine intermediate) is an active-site residue. ATP is bound by residues tyrosine 487, arginine 583, and histidine 611.

It belongs to the polyphosphate kinase 1 (PPK1) family. Mg(2+) is required as a cofactor. In terms of processing, an intermediate of this reaction is the autophosphorylated ppk in which a phosphate is covalently linked to a histidine residue through a N-P bond.

The catalysed reaction is [phosphate](n) + ATP = [phosphate](n+1) + ADP. In terms of biological role, catalyzes the reversible transfer of the terminal phosphate of ATP to form a long-chain polyphosphate (polyP). This Prosthecochloris aestuarii (strain DSM 271 / SK 413) protein is Polyphosphate kinase.